The primary structure comprises 301 residues: tRNA dimethylallyltransferase (301 aa).

Residue 9–16 (GPTASGKS) participates in ATP binding. 11 to 16 (TASGKS) is a binding site for substrate. The segment at 34 to 37 (DSMQ) is interaction with substrate tRNA.

The protein belongs to the IPP transferase family. As to quaternary structure, monomer. Requires Mg(2+) as cofactor.

It carries out the reaction adenosine(37) in tRNA + dimethylallyl diphosphate = N(6)-dimethylallyladenosine(37) in tRNA + diphosphate. In terms of biological role, catalyzes the transfer of a dimethylallyl group onto the adenine at position 37 in tRNAs that read codons beginning with uridine, leading to the formation of N6-(dimethylallyl)adenosine (i(6)A). The chain is tRNA dimethylallyltransferase from Corynebacterium glutamicum (strain ATCC 13032 / DSM 20300 / JCM 1318 / BCRC 11384 / CCUG 27702 / LMG 3730 / NBRC 12168 / NCIMB 10025 / NRRL B-2784 / 534).